A 235-amino-acid polypeptide reads, in one-letter code: MGQKVHPHGIRLGIVKPWNSTWFANTQDFADNLDGDFKVRQFLNKELANASVSRITIERPAKSIRVTIHTARPGIVIGKKGEDVEKLRNAVAAIAGVPAQINIAEVKKPELDAKLVAGSIASQLERRVMFRRAMKKAVQNAMRLGAKGIKVEVSGRLGGAEIARSEWYREGRVPLHTLRADIDYNTSEAHTTYGVIGVKVWIFKGEILGGMAAIAQQPEQQPATPKKAPRGKGRK.

One can recognise a KH type-2 domain in the interval 39-107 (VRQFLNKELA…PAQINIAEVK (69 aa)). The span at 215-226 (AQQPEQQPATPK) shows a compositional bias: low complexity. Positions 215 to 235 (AQQPEQQPATPKKAPRGKGRK) are disordered.

It belongs to the universal ribosomal protein uS3 family. As to quaternary structure, part of the 30S ribosomal subunit. Forms a tight complex with proteins S10 and S14.

Its function is as follows. Binds the lower part of the 30S subunit head. Binds mRNA in the 70S ribosome, positioning it for translation. The chain is Small ribosomal subunit protein uS3 from Histophilus somni (strain 129Pt) (Haemophilus somnus).